A 743-amino-acid chain; its full sequence is Coiled-coil domain-containing protein 30 (743 aa).

Basic and acidic residues-rich tracts occupy residues 1 to 22 and 133 to 193; these read MSQE…REKQ and SPKE…MKPE. 4 disordered regions span residues 1-25, 114-193, 208-233, and 695-715; these read MSQE…QLAS, ENIC…MKPE, SLLQ…GDKL, and SKEA…LVCS. Coiled-coil stretches lie at residues 21 to 98 and 165 to 580; these read KQLA…QLNH and REGQ…LIHS. The span at 208–223 shows a compositional bias: low complexity; it reads SLLQSQSSGDSSDDSG.

The protein belongs to the prefoldin subunit beta family.

The sequence is that of Coiled-coil domain-containing protein 30 (CCDC30) from Macaca fascicularis (Crab-eating macaque).